Reading from the N-terminus, the 302-residue chain is HTH-type transcriptional regulator AlsR (302 aa).

The HTH lysR-type domain maps to 1–58; that stretch reads MELRHLQYFIAVAEELHFGKAARRLNMTQPPLSQQIKQLEEEVGVTLLKRTKRFVELT. The H-T-H motif DNA-binding region spans 18–37; it reads FGKAARRLNMTQPPLSQQIK.

This sequence belongs to the LysR transcriptional regulatory family.

Functionally, regulates the expression of the alsSD operon for acetoin biosynthesis. The sequence is that of HTH-type transcriptional regulator AlsR (alsR) from Bacillus subtilis (strain 168).